Here is an 86-residue protein sequence, read N- to C-terminus: Small ribosomal subunit protein bS20 (86 aa).

Basic residues predominate over residues 1–11 (MANHKSALKRA). The tract at residues 1 to 27 (MANHKSALKRARQNEERRIRNRARKTR) is disordered.

It belongs to the bacterial ribosomal protein bS20 family.

In terms of biological role, binds directly to 16S ribosomal RNA. In Syntrophobacter fumaroxidans (strain DSM 10017 / MPOB), this protein is Small ribosomal subunit protein bS20.